We begin with the raw amino-acid sequence, 209 residues long: Large ribosomal subunit protein uL3 (209 aa).

A disordered region spans residues 133–153 (THGNSLSHRAPGSIGQNQTPG). The residue at position 150 (Gln-150) is an N5-methylglutamine.

Belongs to the universal ribosomal protein uL3 family. In terms of assembly, part of the 50S ribosomal subunit. Forms a cluster with proteins L14 and L19. In terms of processing, methylated by PrmB.

One of the primary rRNA binding proteins, it binds directly near the 3'-end of the 23S rRNA, where it nucleates assembly of the 50S subunit. This chain is Large ribosomal subunit protein uL3, found in Pectobacterium atrosepticum (strain SCRI 1043 / ATCC BAA-672) (Erwinia carotovora subsp. atroseptica).